The chain runs to 312 residues: Probable splicing factor, arginine/serine-rich 1 (312 aa).

The RRM 1 domain maps to Ala3–Pro73. 2 disordered regions span residues Asp69–Tyr125 and Lys196–Asn312. Over residues Arg74–Gly90 the composition is skewed to gly residues. Residues Gly103 to Tyr121 show a composition bias toward basic and acidic residues. The RRM 2 domain maps to His129 to Gln202. The segment covering Ser206–Ser259 has biased composition (basic residues).

Belongs to the splicing factor SR family. Extensively phosphorylated on serine residues in the RS domain.

It is found in the nucleus. In terms of biological role, plays a functionally redundant role in spermatogenesis and growth rate control. This chain is Probable splicing factor, arginine/serine-rich 1 (rsp-1), found in Caenorhabditis elegans.